The following is a 655-amino-acid chain: p-hydroxybenzoic acid efflux pump subunit AaeB (655 aa).

11 consecutive transmembrane segments (helical) span residues 13 to 33 (FAVK…HFQL), 38 to 58 (WAVL…GGEP), 69 to 89 (LRII…IAMI), 93 to 113 (LLMI…SSLV), 121 to 141 (WGLA…EPLL), 152 to 172 (EIVI…PRSI), 370 to 390 (LFWL…IAVV), 407 to 427 (FIYG…VIIP), 431 to 451 (QSML…GIEV), 459 to 479 (MGAL…TFHF), and 482 to 502 (FLDS…VILL).

It belongs to the aromatic acid exporter ArAE (TC 2.A.85) family.

It localises to the cell inner membrane. Functionally, forms an efflux pump with AaeA. Could function as a metabolic relief valve, allowing to eliminate certain compounds when they accumulate to high levels in the cell. The polypeptide is p-hydroxybenzoic acid efflux pump subunit AaeB (Shigella boydii serotype 18 (strain CDC 3083-94 / BS512)).